Here is a 262-residue protein sequence, read N- to C-terminus: Matrilysin (262 aa).

The signal sequence occupies residues 1–12 (LCVLCLLPQSPA). Residues 13-89 (LPLPREAGGH…PRCGLPDTGE (77 aa)) constitute a propeptide, activation peptide. Residues 80 to 87 (PRCGLPDT) carry the Cysteine switch motif. Position 82 (C82) interacts with Zn(2+). A Ca(2+)-binding site is contributed by D148. The Zn(2+) site is built by H158 and D160. Ca(2+)-binding residues include D165, G166, G168, and T170. Residue H173 participates in Zn(2+) binding. Ca(2+) is bound by residues G180, G182, and D184. H186 contributes to the Zn(2+) binding site. The Ca(2+) site is built by D188 and E191. H209 lines the Zn(2+) pocket. E210 is a catalytic residue. 2 residues coordinate Zn(2+): H213 and H219.

This sequence belongs to the peptidase M10A family. Ca(2+) serves as cofactor. It depends on Zn(2+) as a cofactor.

It localises to the secreted. It is found in the extracellular space. The protein localises to the extracellular matrix. The enzyme catalyses Cleavage of 14-Ala-|-Leu-15 and 16-Tyr-|-Leu-17 in B chain of insulin. No action on collagen types I, II, IV, V. Cleaves gelatin chain alpha2(I) &gt; alpha1(I).. Degrades casein, gelatins of types I, III, IV, and V, and fibronectin. Activates procollagenase. The protein is Matrilysin (MMP7) of Felis catus (Cat).